Reading from the N-terminus, the 56-residue chain is Large ribosomal subunit protein bL33A (56 aa).

Belongs to the bacterial ribosomal protein bL33 family.

The protein is Large ribosomal subunit protein bL33A of Nocardia farcinica (strain IFM 10152).